Reading from the N-terminus, the 574-residue chain is Proline--tRNA ligase (574 aa).

The protein belongs to the class-II aminoacyl-tRNA synthetase family. ProS type 1 subfamily. Homodimer.

It localises to the cytoplasm. It catalyses the reaction tRNA(Pro) + L-proline + ATP = L-prolyl-tRNA(Pro) + AMP + diphosphate. Its function is as follows. Catalyzes the attachment of proline to tRNA(Pro) in a two-step reaction: proline is first activated by ATP to form Pro-AMP and then transferred to the acceptor end of tRNA(Pro). As ProRS can inadvertently accommodate and process non-cognate amino acids such as alanine and cysteine, to avoid such errors it has two additional distinct editing activities against alanine. One activity is designated as 'pretransfer' editing and involves the tRNA(Pro)-independent hydrolysis of activated Ala-AMP. The other activity is designated 'posttransfer' editing and involves deacylation of mischarged Ala-tRNA(Pro). The misacylated Cys-tRNA(Pro) is not edited by ProRS. This Teredinibacter turnerae (strain ATCC 39867 / T7901) protein is Proline--tRNA ligase.